Consider the following 546-residue polypeptide: Probable protein kinase UbiB (546 aa).

One can recognise a Protein kinase domain in the interval 124–502 (DFEIKPLASA…HVRQGQSRYF (379 aa)). ATP is bound by residues 130-138 (LASASIAQV) and Lys-153. The active-site Proton acceptor is the Asp-288. The next 2 helical transmembrane spans lie at 501-521 (YFLG…VSRP) and 522-542 (EWGL…FVGW).

Belongs to the ABC1 family. UbiB subfamily.

The protein resides in the cell inner membrane. Its pathway is cofactor biosynthesis; ubiquinone biosynthesis [regulation]. Functionally, is probably a protein kinase regulator of UbiI activity which is involved in aerobic coenzyme Q (ubiquinone) biosynthesis. The protein is Probable protein kinase UbiB of Escherichia coli (strain SMS-3-5 / SECEC).